A 446-amino-acid chain; its full sequence is 4-aminobutyrate aminotransferase (446 aa).

Lysine 291 is modified (N6-(pyridoxal phosphate)lysine).

It belongs to the class-III pyridoxal-phosphate-dependent aminotransferase family. Pyridoxal 5'-phosphate serves as cofactor.

The catalysed reaction is 4-aminobutanoate + 2-oxoglutarate = succinate semialdehyde + L-glutamate. It catalyses the reaction (S)-3-amino-2-methylpropanoate + 2-oxoglutarate = 2-methyl-3-oxopropanoate + L-glutamate. It functions in the pathway amino-acid degradation; 4-aminobutanoate degradation. This is 4-aminobutyrate aminotransferase (gabT) from Mycobacterium leprae (strain TN).